Reading from the N-terminus, the 435-residue chain is MKFFTAALFASAVSAFAVDSIIPGARVIPATDTLELQHVGAHHHKHPNRRTVTIRSSRNDTDDVSKDFLWGISRANHGGRLLLQKGKKYVIGKKLDLSFLNNIEVQLDGELKFTDDVPYWQKNNFYYSFQKSISFWRWGGQDIKIFGSGVLNGNGQRWYNEFAGQEILDPDNTFYRPILFVTENATRVSVEGITQLNSPCWTNFFVGSNDVSFDNVYIEAFSTNASALPKNTDGFDSYNVKGLSVTNTRVNVGDDCFSPKPNTTDIFVQNLWCNGTHGVSMGSIGQYPGVMDIIEHAYIENVTLLNGQNGARLKAWAGENVGYGRINNITYKNIRIENTDKPVVLDQCYFNVDTATCAEYPSSVNITNITFENVYGTSSGKEGKVVADLVCSPNAVCSDIHLADIDLTSPAGSPPVIICEGIQGDIGVECQSSTS.

The N-terminal stretch at 1-15 is a signal peptide; sequence MKFFTAALFASAVSA. Residues Asn-59, Asn-184, and Asn-224 are each glycosylated (N-linked (GlcNAc...) asparagine). The Proton donor role is filled by Asp-254. Cys-256 and Cys-273 are oxidised to a cystine. Asn-262 and Asn-274 each carry an N-linked (GlcNAc...) asparagine glycan. The active site involves His-277. 4 N-linked (GlcNAc...) asparagine glycosylation sites follow: Asn-301, Asn-328, Asn-365, and Asn-368. Cys-391 and Cys-397 are disulfide-bonded.

The protein belongs to the glycosyl hydrolase 28 family.

It localises to the secreted. It catalyses the reaction [(1-&gt;4)-alpha-D-galacturonosyl](n) + H2O = alpha-D-galacturonate + [(1-&gt;4)-alpha-D-galacturonosyl](n-1). Functionally, specific in hydrolyzing the terminal glycosidic bond of polygalacturonic acid and oligogalacturonates. This Aspergillus terreus (strain NIH 2624 / FGSC A1156) protein is Probable exopolygalacturonase B (pgxB).